Reading from the N-terminus, the 486-residue chain is uncharacterized protein (486 aa).

2 ABC transporter domains span residues 2-241 and 249-486; these read VEFK…KVFV and FEKD…LLFL. 36-43 serves as a coordination point for ATP; sequence GKNGEGKS.

It belongs to the ABC transporter superfamily.

This is an uncharacterized protein from Borreliella burgdorferi (strain ATCC 35210 / DSM 4680 / CIP 102532 / B31) (Borrelia burgdorferi).